We begin with the raw amino-acid sequence, 467 residues long: Cysteine--tRNA ligase (467 aa).

Cys28 is a Zn(2+) binding site. The short motif at 30 to 40 (MTVYDYCHLGH) is the 'HIGH' region element. 3 residues coordinate Zn(2+): Cys209, His234, and Glu238. Positions 266-270 (KMSKS) match the 'KMSKS' region motif. Position 269 (Lys269) interacts with ATP.

This sequence belongs to the class-I aminoacyl-tRNA synthetase family. As to quaternary structure, monomer. Requires Zn(2+) as cofactor.

Its subcellular location is the cytoplasm. It carries out the reaction tRNA(Cys) + L-cysteine + ATP = L-cysteinyl-tRNA(Cys) + AMP + diphosphate. This Hahella chejuensis (strain KCTC 2396) protein is Cysteine--tRNA ligase.